The primary structure comprises 55 residues: Large ribosomal subunit protein bL33 (55 aa).

Belongs to the bacterial ribosomal protein bL33 family.

The protein is Large ribosomal subunit protein bL33 of Klebsiella pneumoniae (strain 342).